A 148-amino-acid chain; its full sequence is Cell division protein SepF (148 aa).

The protein belongs to the SepF family. As to quaternary structure, homodimer. Interacts with FtsZ.

The protein resides in the cytoplasm. In terms of biological role, cell division protein that is part of the divisome complex and is recruited early to the Z-ring. Probably stimulates Z-ring formation, perhaps through the cross-linking of FtsZ protofilaments. Its function overlaps with FtsA. In Alkaliphilus metalliredigens (strain QYMF), this protein is Cell division protein SepF.